A 333-amino-acid chain; its full sequence is T-cell surface glycoprotein CD1c (333 aa).

A signal peptide spans 1-17 (MLFLQFLLLALLLPGGD). Topologically, residues 18-302 (NADASQEHVS…ILYWGHHFSM (285 aa)) are extracellular. N-linked (GlcNAc...) asparagine glycosylation is found at N38, N70, N75, and N146. Disulfide bonds link C120–C185 and C225–C280. In terms of domain architecture, Ig-like spans 206 to 296 (PEAWLSSRPS…LGGQDIILYW (91 aa)). A helical membrane pass occupies residues 303-323 (NWIALVVIVPLVILIVLVLWF). The Cytoplasmic portion of the chain corresponds to 324–333 (KKHCSYQDIL). The short motif at 329–332 (YQDI) is the Internalization signal element.

Heterodimer with B2M (beta-2-microglobulin). As to expression, expressed on cortical thymocytes, on certain T-cell leukemias, and in various other tissues.

It is found in the cell membrane. It localises to the endosome membrane. The protein resides in the lysosome. Functionally, antigen-presenting protein that binds self and non-self lipid and glycolipid antigens and presents them to T-cell receptors on natural killer T-cells. The chain is T-cell surface glycoprotein CD1c (CD1C) from Homo sapiens (Human).